The following is a 798-amino-acid chain: Cadherin-20 (798 aa).

The N-terminal stretch at 1 to 35 is a signal peptide; the sequence is MWTSGRMSNAKNLFGLGVSLYFWGLMDLTTTVLSG. A propeptide spanning residues 36–58 is cleaved from the precursor; the sequence is SARPLTEGPEDNLSDKLHQRMKR. Asn-47 carries N-linked (GlcNAc...) asparagine glycosylation. The Extracellular segment spans residues 59 to 618; it reads SWVWNQFFVL…AYVLPVSLSR (560 aa). 5 Cadherin domains span residues 60 to 164, 165 to 273, 274 to 392, 389 to 493, and 493 to 615; these read WVWN…EPKF, LDGP…PPRF, PQKH…EPSF, EPSF…APEF, and FARF…LPVS. Residues 88–90 carry the Cell attachment site motif; it reads RGD. An N-linked (GlcNAc...) asparagine glycan is attached at Asn-260. 3 N-linked (GlcNAc...) asparagine glycosylation sites follow: Asn-419, Asn-460, and Asn-541. A helical membrane pass occupies residues 619-639; it reads GALIAILACIFVLLVLVLLIL. Topologically, residues 640-798 are cytoplasmic; it reads SMRRQRKQPY…GATDSSGALW (159 aa).

In terms of tissue distribution, detected in embryonic spinal cord, in the brachial and lumbar section of motor neurons (at protein level). Detected in ventro-lateral portion of embryonic spinal cord, in the brachial and lumbar section of embryonic motor neurons. Detected in embryonic adductor motor neurons and embryonic dorsal root ganglion. Detected in the caudal half of newly generated somites and in presomitic mesoderm.

The protein localises to the cell membrane. Cadherins are calcium-dependent cell adhesion proteins. They preferentially interact with themselves in a homophilic manner in connecting cells; cadherins may thus contribute to the sorting of heterogeneous cell types. The polypeptide is Cadherin-20 (CDH20) (Gallus gallus (Chicken)).